Reading from the N-terminus, the 384-residue chain is Methylthioribose-1-phosphate isomerase (384 aa).

Asp-255 acts as the Proton donor in catalysis.

Belongs to the eIF-2B alpha/beta/delta subunits family. MtnA subfamily.

The protein resides in the cytoplasm. The protein localises to the nucleus. It catalyses the reaction 5-(methylsulfanyl)-alpha-D-ribose 1-phosphate = 5-(methylsulfanyl)-D-ribulose 1-phosphate. The protein operates within amino-acid biosynthesis; L-methionine biosynthesis via salvage pathway; L-methionine from S-methyl-5-thio-alpha-D-ribose 1-phosphate: step 1/6. In terms of biological role, catalyzes the interconversion of methylthioribose-1-phosphate (MTR-1-P) into methylthioribulose-1-phosphate (MTRu-1-P). The chain is Methylthioribose-1-phosphate isomerase (mri1) from Talaromyces stipitatus (strain ATCC 10500 / CBS 375.48 / QM 6759 / NRRL 1006) (Penicillium stipitatum).